The following is a 118-amino-acid chain: Ribosome-binding factor A (118 aa).

The protein belongs to the RbfA family. In terms of assembly, monomer. Binds 30S ribosomal subunits, but not 50S ribosomal subunits or 70S ribosomes.

It is found in the cytoplasm. One of several proteins that assist in the late maturation steps of the functional core of the 30S ribosomal subunit. Associates with free 30S ribosomal subunits (but not with 30S subunits that are part of 70S ribosomes or polysomes). Required for efficient processing of 16S rRNA. May interact with the 5'-terminal helix region of 16S rRNA. This Clostridium beijerinckii (strain ATCC 51743 / NCIMB 8052) (Clostridium acetobutylicum) protein is Ribosome-binding factor A.